We begin with the raw amino-acid sequence, 333 residues long: DNA-directed RNA polymerase subunit alpha (333 aa).

The tract at residues 1-251 is alpha N-terminal domain (alpha-NTD); sequence MEKLTKIKHR…AHFQTIGDLT (251 aa). Residues 272–333 are alpha C-terminal domain (alpha-CTD); sequence DMEIRLLNLS…KLNEYGKLKN (62 aa).

The protein belongs to the RNA polymerase alpha chain family. In terms of assembly, homodimer. The RNAP catalytic core consists of 2 alpha, 1 beta, 1 beta' and 1 omega subunit. When a sigma factor is associated with the core the holoenzyme is formed, which can initiate transcription.

It catalyses the reaction RNA(n) + a ribonucleoside 5'-triphosphate = RNA(n+1) + diphosphate. Functionally, DNA-dependent RNA polymerase catalyzes the transcription of DNA into RNA using the four ribonucleoside triphosphates as substrates. This is DNA-directed RNA polymerase subunit alpha from Mycoplasmopsis synoviae (strain 53) (Mycoplasma synoviae).